A 382-amino-acid chain; its full sequence is Chaperone protein DnaJ (382 aa).

The J domain maps to 4-69 (DYYEVLGVSR…DKRRRYDQFG (66 aa)). The CR-type zinc finger occupies 138-219 (GVEKTIKIKK…CYGEGIKQGE (82 aa)). The Zn(2+) site is built by Cys-151, Cys-154, Cys-167, Cys-170, Cys-193, Cys-196, Cys-207, and Cys-210. CXXCXGXG motif repeat units lie at residues 151-158 (CKECNGSG), 167-174 (CPTCHGAG), 193-200 (CPTCGGEG), and 207-214 (CPSCYGEG).

The protein belongs to the DnaJ family. Homodimer. Zn(2+) serves as cofactor.

It is found in the cytoplasm. Participates actively in the response to hyperosmotic and heat shock by preventing the aggregation of stress-denatured proteins and by disaggregating proteins, also in an autonomous, DnaK-independent fashion. Unfolded proteins bind initially to DnaJ; upon interaction with the DnaJ-bound protein, DnaK hydrolyzes its bound ATP, resulting in the formation of a stable complex. GrpE releases ADP from DnaK; ATP binding to DnaK triggers the release of the substrate protein, thus completing the reaction cycle. Several rounds of ATP-dependent interactions between DnaJ, DnaK and GrpE are required for fully efficient folding. Also involved, together with DnaK and GrpE, in the DNA replication of plasmids through activation of initiation proteins. This is Chaperone protein DnaJ from Chlorobium luteolum (strain DSM 273 / BCRC 81028 / 2530) (Pelodictyon luteolum).